Consider the following 218-residue polypeptide: Cytochrome b6 (218 aa).

A helical membrane pass occupies residues 35–55; that stretch reads IFYCLGGITLVCFLVQFATGF. Cysteine 38 contacts heme c. Heme b-binding residues include histidine 89 and histidine 103. 3 consecutive transmembrane segments (helical) span residues 93-113, 119-139, and 189-209; these read ASMM…TGGF, LTWV…VTGY, and LHTF…FLMI. Residues histidine 190 and histidine 205 each contribute to the heme b site.

It belongs to the cytochrome b family. PetB subfamily. The 4 large subunits of the cytochrome b6-f complex are cytochrome b6, subunit IV (17 kDa polypeptide, PetD), cytochrome f and the Rieske protein, while the 4 small subunits are PetG, PetL, PetM and PetN. The complex functions as a dimer. Heme b is required as a cofactor. The cofactor is heme c.

The protein resides in the cellular thylakoid membrane. Functionally, component of the cytochrome b6-f complex, which mediates electron transfer between photosystem II (PSII) and photosystem I (PSI), cyclic electron flow around PSI, and state transitions. In Prochlorococcus marinus (strain MIT 9303), this protein is Cytochrome b6.